Reading from the N-terminus, the 196-residue chain is Phosphoheptose isomerase (196 aa).

The region spanning 36-196 is the SIS domain; it reads MVACLMNEGK…AVDYMLLGGD (161 aa). A substrate-binding site is contributed by 51–53; sequence NGG. Zn(2+) is bound by residues His-60 and Glu-64. Residues Glu-64, 93-94, 119-121, Ser-124, and Gln-174 each bind substrate; these read ND and STS. Zn(2+)-binding residues include Gln-174 and His-182.

Belongs to the SIS family. GmhA subfamily. In terms of assembly, homotetramer. Zn(2+) is required as a cofactor.

The protein localises to the cytoplasm. It carries out the reaction 2 D-sedoheptulose 7-phosphate = D-glycero-alpha-D-manno-heptose 7-phosphate + D-glycero-beta-D-manno-heptose 7-phosphate. Its pathway is carbohydrate biosynthesis; D-glycero-D-manno-heptose 7-phosphate biosynthesis; D-glycero-alpha-D-manno-heptose 7-phosphate and D-glycero-beta-D-manno-heptose 7-phosphate from sedoheptulose 7-phosphate: step 1/1. Catalyzes the isomerization of sedoheptulose 7-phosphate in D-glycero-D-manno-heptose 7-phosphate. The protein is Phosphoheptose isomerase of Laribacter hongkongensis (strain HLHK9).